The sequence spans 485 residues: Glutamate--tRNA ligase (485 aa).

The 'HIGH' region motif lies at 11 to 21 (PSPTGYMHVGN). Zn(2+)-binding residues include Cys-108, Cys-110, Cys-135, and Asp-137. The short motif at 252–256 (KLSKR) is the 'KMSKS' region element. Lys-255 is a binding site for ATP.

The protein belongs to the class-I aminoacyl-tRNA synthetase family. Glutamate--tRNA ligase type 1 subfamily. As to quaternary structure, monomer. The cofactor is Zn(2+).

It is found in the cytoplasm. The catalysed reaction is tRNA(Glu) + L-glutamate + ATP = L-glutamyl-tRNA(Glu) + AMP + diphosphate. Functionally, catalyzes the attachment of glutamate to tRNA(Glu) in a two-step reaction: glutamate is first activated by ATP to form Glu-AMP and then transferred to the acceptor end of tRNA(Glu). In Clostridium botulinum (strain Loch Maree / Type A3), this protein is Glutamate--tRNA ligase.